We begin with the raw amino-acid sequence, 67 residues long: ATP synthase protein 8 (67 aa).

Residues 8-24 traverse the membrane as a helical segment; that stretch reads TWFITILATILTLFIIM. Lys54 bears the N6-acetyllysine; alternate mark. Lys54 is subject to N6-succinyllysine; alternate. The residue at position 57 (Lys57) is an N6-acetyllysine.

The protein belongs to the ATPase protein 8 family. In terms of assembly, F-type ATPases have 2 components, CF(1) - the catalytic core - and CF(0) - the membrane proton channel. Component of an ATP synthase complex composed of ATP5PB, ATP5MC1, ATP5F1E, ATP5PD, ATP5ME, ATP5PF, ATP5MF, MT-ATP6, MT-ATP8, ATP5F1A, ATP5F1B, ATP5F1D, ATP5F1C, ATP5PO, ATP5MG, ATP5MK and ATP5MJ. Interacts with PRICKLE3.

It localises to the mitochondrion membrane. In terms of biological role, mitochondrial membrane ATP synthase (F(1)F(0) ATP synthase or Complex V) produces ATP from ADP in the presence of a proton gradient across the membrane which is generated by electron transport complexes of the respiratory chain. F-type ATPases consist of two structural domains, F(1) - containing the extramembraneous catalytic core and F(0) - containing the membrane proton channel, linked together by a central stalk and a peripheral stalk. During catalysis, ATP synthesis in the catalytic domain of F(1) is coupled via a rotary mechanism of the central stalk subunits to proton translocation. Part of the complex F(0) domain. Minor subunit located with subunit a in the membrane. This chain is ATP synthase protein 8 (MT-ATP8), found in Artibeus jamaicensis (Jamaican fruit-eating bat).